A 189-amino-acid polypeptide reads, in one-letter code: UPF0301 protein RAF_ORF0041 (189 aa).

This sequence belongs to the UPF0301 (AlgH) family.

The protein is UPF0301 protein RAF_ORF0041 of Rickettsia africae (strain ESF-5).